The primary structure comprises 229 residues: Casparian strip membrane protein 1 (229 aa).

Residues 1 to 67 are Cytoplasmic-facing; that stretch reads MSTSEAGAAA…FRRADRGSRC (67 aa). Residues 68–88 form a helical membrane-spanning segment; sequence VALLDFVLRVAAFGPALAAAI. The Extracellular portion of the chain corresponds to 89-115; that stretch reads ATGTSDETLSVFTQFFQFHARFDDFPA. A helical transmembrane segment spans residues 116-136; it reads LLFFMVANAIAAGYLVLSLPF. Residues 137-157 lie on the Cytoplasmic side of the membrane; the sequence is SAVIVLRPQAIGLRHLLLVCD. Residues 158–178 traverse the membrane as a helical segment; the sequence is MIIAALLTAAAAAAAAIVDLA. The Extracellular portion of the chain corresponds to 179 to 205; it reads HSGNLRANWVPICMQFHGFCQRTSGAV. A helical membrane pass occupies residues 206–226; it reads VGSFLAVLVLLFLVILAAFAI. The Cytoplasmic portion of the chain corresponds to 227-229; that stretch reads RKR.

The protein belongs to the Casparian strip membrane proteins (CASP) family. Homodimer and heterodimers.

Its subcellular location is the cell membrane. Regulates membrane-cell wall junctions and localized cell wall deposition. Required for establishment of the Casparian strip membrane domain (CSD) and the subsequent formation of Casparian strips, a cell wall modification of the root endodermis that determines an apoplastic barrier between the intraorganismal apoplasm and the extraorganismal apoplasm and prevents lateral diffusion. The polypeptide is Casparian strip membrane protein 1 (Sorghum bicolor (Sorghum)).